A 542-amino-acid polypeptide reads, in one-letter code: Keratin, type II cytoskeletal 75 (542 aa).

The segment covering 1 to 26 has biased composition (polar residues); that stretch reads MSRQSTVTFHSGSRRGFSTASATTPT. The interval 1–44 is disordered; sequence MSRQSTVTFHSGSRRGFSTASATTPTAGRSRFSSVSVARSSGNS. Residues 1-139 form a head region; it reads MSRQSTVTFH…DPTIQRVRKE (139 aa). Positions 27-42 are enriched in low complexity; it reads AGRSRFSSVSVARSSG. The coil 1A stretch occupies residues 140–175; that stretch reads EREQIKTLNNKFASFIDKVRFLEQQNKVLETKWNLL. An IF rod domain is found at 140 to 453; that stretch reads EREQIKTLNN…KLLEGEECRL (314 aa). A linker 1 region spans residues 176-194; the sequence is QEQGSRTVRQNLEPFFDAY. Residues 195–287 form a coil 1B region; sequence VNDLRRQLDS…VYEAELSQMQ (93 aa). The tract at residues 288–310 is linker 12; that stretch reads NQVSDTSVVLSMDNNRSLDLDSI. A coil 2 region spans residues 311–449; the sequence is IAEVKAQYED…ATYRKLLEGE (139 aa). The tract at residues 450–542 is tail; it reads ECRLSGEGVS…TSSSRKSYKH (93 aa). Residues 514–542 are disordered; it reads TSSSRGPVGSGSSIKFVSSTSSSRKSYKH.

It belongs to the intermediate filament family. As to quaternary structure, heterodimer of a type I and a type II keratin. May associate with KRT17.

Functionally, plays a central role in hair and nail formation. Essential component of keratin intermediate filaments in the companion layer of the hair follicle. In Rattus norvegicus (Rat), this protein is Keratin, type II cytoskeletal 75 (Krt75).